A 512-amino-acid polypeptide reads, in one-letter code: Maturase K (512 aa).

The protein belongs to the intron maturase 2 family. MatK subfamily.

Its subcellular location is the plastid. The protein localises to the chloroplast. Functionally, usually encoded in the trnK tRNA gene intron. Probably assists in splicing its own and other chloroplast group II introns. The polypeptide is Maturase K (Lilium tsingtauense (Twilight lily)).